Reading from the N-terminus, the 524-residue chain is Chromosomal replication initiator protein DnaA (524 aa).

The domain I, interacts with DnaA modulators stretch occupies residues 1–105 (MSQNSSSLLE…EQEIPETPAQ (105 aa)). A disordered region spans residues 95–183 (PEQEIPETPA…PAHNPNREVS (89 aa)). The segment at 106–182 (QEFKYQPDAP…TPAHNPNREV (77 aa)) is domain II. The span at 148 to 158 (APEPHPAPIAD) shows a compositional bias: pro residues. Residues 183-399 (SLNPKYTFES…GALIRVSAYS (217 aa)) are domain III, AAA+ region. ATP is bound by residues Gly227, Gly229, Lys230, and Thr231. Residues 400-524 (SLINQPIDKE…TQLIKSRGRN (125 aa)) are domain IV, binds dsDNA.

The protein belongs to the DnaA family. In terms of assembly, oligomerizes as a right-handed, spiral filament on DNA at oriC.

The protein resides in the cytoplasm. Its function is as follows. Plays an essential role in the initiation and regulation of chromosomal replication. ATP-DnaA binds to the origin of replication (oriC) to initiate formation of the DNA replication initiation complex once per cell cycle. Binds the DnaA box (a 9 base pair repeat at the origin) and separates the double-stranded (ds)DNA. Forms a right-handed helical filament on oriC DNA; dsDNA binds to the exterior of the filament while single-stranded (ss)DNA is stabiized in the filament's interior. The ATP-DnaA-oriC complex binds and stabilizes one strand of the AT-rich DNA unwinding element (DUE), permitting loading of DNA polymerase. After initiation quickly degrades to an ADP-DnaA complex that is not apt for DNA replication. Binds acidic phospholipids. The protein is Chromosomal replication initiator protein DnaA of Corynebacterium glutamicum (strain R).